A 212-amino-acid chain; its full sequence is Probable GTP-binding protein EngB (212 aa).

The EngB-type G domain maps to 27–211 (GPPEIAFAGR…QAAIVLAANG (185 aa)). Residues 35 to 42 (GRSNVGKS), 62 to 66 (GRTQE), 89 to 92 (DMPG), 156 to 159 (TKTD), and 190 to 192 (TSS) contribute to the GTP site. The Mg(2+) site is built by S42 and T64.

It belongs to the TRAFAC class TrmE-Era-EngA-EngB-Septin-like GTPase superfamily. EngB GTPase family. It depends on Mg(2+) as a cofactor.

Functionally, necessary for normal cell division and for the maintenance of normal septation. The polypeptide is Probable GTP-binding protein EngB (Mesorhizobium japonicum (strain LMG 29417 / CECT 9101 / MAFF 303099) (Mesorhizobium loti (strain MAFF 303099))).